Reading from the N-terminus, the 1175-residue chain is Atrophin-1 (1175 aa).

Disordered stretches follow at residues 1 to 595 (MKTR…VTTS), 608 to 752 (SSPA…ARFN), and 770 to 847 (VPLE…HRPP). Positions 16 to 32 (RKKEAPGPREELRSRGR) match the Nuclear localization signal motif. Residues 17-29 (KKEAPGPREELRS) are compositionally biased toward basic and acidic residues. At Ser34 the chain carries Phosphoserine. Basic and acidic residues predominate over residues 45–63 (GKAEKSRQTAKKARIEEPS). Phosphoserine is present on residues Ser77, Ser79, Ser101, Ser103, and Ser107. Over residues 108–128 (LDGRSINDDGSSDPRDIDQDN) the composition is skewed to basic and acidic residues. Residues 129 to 152 (RSTSPSIYSPGSVENDSDSSSGLS) show a composition bias toward polar residues. Pro residues-rich tracts occupy residues 158–174 (PYHPPPLFPPSPPPPDS) and 208–217 (GPPPGAPPTH). Composition is skewed to low complexity over residues 240 to 253 (GAAASSVGAPSGGK) and 262 to 273 (IPISSSGASGAP). The segment covering 345–374 (PPGPEKGPTLAPSPHPLPPASSSAPGPPMR) has biased composition (pro residues). Over residues 378 to 396 (SSSSSSAAASSSSSSSSAS) the composition is skewed to low complexity. Residues 416–437 (SMSVSNQPPKYTQPSLPSQAVW) show a composition bias toward polar residues. Basic residues predominate over residues 476-491 (THHHHQQQPQQQHHHG). Residues 503-553 (HPLESSNSHHAHPYNMSPSLGSLRPYPPGPAHLPPPHGQVSYNQAGPNGPP) are involved in binding BAIAP2. Residues 527 to 539 (PYPPGPAHLPPPH) show a composition bias toward pro residues. Residues 547 to 584 (AGPNGPPVSSSNSSGSSSQASYSCSHPSSSQGPQGASY) are compositionally biased toward low complexity. Ser617 bears the Phosphoserine mark. Lys626 bears the N6-acetyllysine mark. Thr638 is subject to Phosphothreonine. Residue Ser646 is modified to Phosphoserine. Thr654 is modified (phosphothreonine). Pro residues-rich tracts occupy residues 693 to 703 (LPPPPAAPTTG) and 722 to 737 (PESPVPPARSPSPPPK). Position 724 is a phosphoserine; by MAPK8 (Ser724). A phosphoserine mark is found at Ser731 and Ser733. Basic and acidic residues predominate over residues 780-824 (KRADLVEKVRREAEQRAREEKEREREREREKEREREKERELERSV). Residues 864-879 (DTPALRTLSEYARPHV) are required for interaction with FAT1. Ser881 is modified (phosphoserine). The tract at residues 913–932 (PAAREREREARERDLRDRLK) is disordered. The span at 914 to 932 (AAREREREARERDLRDRLK) shows a compositional bias: basic and acidic residues. The Nuclear export signal motif lies at 1018-1026 (ALGNDPLAR). Arg1100 bears the Asymmetric dimethylarginine mark. A Glycyl lysine isopeptide (Lys-Gly) (interchain with G-Cter in SUMO2) cross-link involves residue Lys1168.

Interacts with BAIAP2, WWP1, WWP2, WWP3 and RERE. Interacts (via its N-terminus) with MTG8; the interaction enhances transcriptional repression of MTG8. Interacts with PQBP1. Interacts with NR2E1; the interaction represses the transcriptional activity of NR2E1. Interacts with FAT1 (via a C-terminal domain). Phosphorylated in vitro by MAPK8/JNK1 on Ser-724. In terms of tissue distribution, widely expressed. Most abundant in the brain.

It is found in the cytoplasm. The protein localises to the perinuclear region. It localises to the cell junction. The protein resides in the nucleus. Functionally, transcriptional corepressor. Corepressor of MTG8 transcriptional repression. Has some intrinsic repression activity which is independent of the number of the poly-Q repeats. Recruits NR2E1 to repress transcription. Promotes vascular smooth cell (VSMC) migration and orientation. In Mus musculus (Mouse), this protein is Atrophin-1 (Atn1).